An 87-amino-acid chain; its full sequence is U3-theraphotoxin-Hhn1a 3 (87 aa).

Residues 1–24 (MVNMKASMFLTFAGLVLLFVVCYA) form the signal peptide. Residues 25–52 (PESEEKEFPKEMLSSIFAVDNDFKQEER) constitute a propeptide that is removed on maturation. Cystine bridges form between cysteine 54–cysteine 67, cysteine 61–cysteine 72, and cysteine 66–cysteine 79.

It belongs to the neurotoxin 10 (Hwtx-1) family. 51 (Hntx-8) subfamily. Hntx-8 sub-subfamily. In terms of tissue distribution, expressed by the venom gland.

It is found in the secreted. Its function is as follows. Ion channel inhibitor. The protein is U3-theraphotoxin-Hhn1a 3 of Cyriopagopus hainanus (Chinese bird spider).